The following is a 146-amino-acid chain: Probable glycine cleavage system H protein 1, mitochondrial (146 aa).

The N-terminal 30 residues, 1 to 30 (MLKTLRFGTRAFGQNLNIAKRNFCTRYTND), are a transit peptide targeting the mitochondrion. Residues 41-123 (NYRLGITDFA…MGDGWIVEYK (83 aa)) form the Lipoyl-binding domain. Lysine 82 carries the post-translational modification N6-lipoyllysine.

This sequence belongs to the GcvH family. The glycine cleavage system is composed of four proteins: P, T, L and H. The cofactor is (R)-lipoate.

The protein resides in the mitochondrion. Functionally, the glycine cleavage system catalyzes the degradation of glycine. The H protein shuttles the methylamine group of glycine from the P protein to the T protein. The chain is Probable glycine cleavage system H protein 1, mitochondrial (gcvH1) from Dictyostelium discoideum (Social amoeba).